The following is a 759-amino-acid chain: TSK-associating protein 1 (759 aa).

Residues M1–C29 form the signal peptide. The segment at G55–T74 is disordered. The segment covering A63 to T74 has biased composition (polar residues). 10 EFE repeat repeats span residues V91 to L138, S139 to H176, S177 to H215, S216 to Q254, S255 to H293, A294 to H329, F330 to Q368, S369 to Q407, S408 to E443, and S444 to E473. Positions V91 to E473 are 10 X approximate EFE repeat. Coiled-coil stretches lie at residues R142 to A461 and I685 to E734. Disordered stretches follow at residues E154–L184, Q200–R219, A271–A332, and L393–M414.

As to quaternary structure, homomultimer. Interacts (via C-terminal domain) with GIP1, CSN1 (via N-terminal domain) and TSK (via TPR repeats). In terms of processing, binds calcium through the EFE repeats. In terms of tissue distribution, expressed preferentially in flowers and shoot apex.

Its subcellular location is the endoplasmic reticulum lumen. It localises to the nucleus envelope. It is found in the cytoplasm. Its function is as follows. Involved in seedling development in the dark. May be involved, when interacting with TSK, in the organization of spindle microtubules and may participate, when interacting with GIP1, in structural links between the nuclear envelope and the cytoskeleton. The protein is TSK-associating protein 1 (TSA1) of Arabidopsis thaliana (Mouse-ear cress).